A 147-amino-acid polypeptide reads, in one-letter code: uncharacterized protein (147 aa).

Residues 71-91 (IDILAFVAGTVGVGSLVLLQF) form a helical membrane-spanning segment.

It is found in the virion. The protein localises to the host membrane. This is an uncharacterized protein from Acanthamoeba polyphaga mimivirus (APMV).